A 106-amino-acid polypeptide reads, in one-letter code: Large ribosomal subunit protein eL42 (106 aa).

Belongs to the eukaryotic ribosomal protein eL42 family.

The protein is Large ribosomal subunit protein eL42 (RPL44) of Kluyveromyces marxianus (Yeast).